The sequence spans 214 residues: Putative F-box protein At3g58910 (214 aa).

An F-box domain is found at 1–47 (MDRVSSLPDELLCHILSFLTTKETALTSLLSKREIIPLIKSVVFPTL).

This Arabidopsis thaliana (Mouse-ear cress) protein is Putative F-box protein At3g58910.